Reading from the N-terminus, the 764-residue chain is FAST kinase domain-containing protein 5, mitochondrial (764 aa).

Ser-95 is modified (phosphoserine). At Lys-507 the chain carries N6-acetyllysine. The RAP domain maps to 697–757; it reads LAIQFTNRNQ…RLEKLAFLHE (61 aa).

The protein belongs to the FAST kinase family. As to quaternary structure, found in a complex with GRSF1, DDX28, DHX30 and FASTKD2. Associates with the 12S mitochondrial rRNA (12S mt-rRNA).

The protein localises to the mitochondrion matrix. The protein resides in the mitochondrion nucleoid. Its function is as follows. Plays an important role in the processing of non-canonical mitochondrial mRNA precursors. The chain is FAST kinase domain-containing protein 5, mitochondrial (FASTKD5) from Macaca fascicularis (Crab-eating macaque).